Here is a 585-residue protein sequence, read N- to C-terminus: MAGUK p55 subfamily member 3 (585 aa).

L27 domains follow at residues 6-60 (EDSG…ERQS) and 61-118 (PTPV…FDPV). The PDZ domain occupies 137–212 (IVRLVKNKEP…LAQSQGSITL (76 aa)). Positions 226 to 296 (ESKVFMRALF…PSKGFQERRL (71 aa)) constitute an SH3 domain. Ser-307 bears the Phosphoserine mark. Residues 385 to 570 (PRLVVLIGSL…AYSQLKVVLE (186 aa)) enclose the Guanylate kinase-like domain.

This sequence belongs to the MAGUK family. Interacts with HTR2C; this interaction stabilizes the receptor at the plasma membrane and prevents the desensitization of the HTR2C receptor-mediated calcium response. Interacts with HTR2A. Interacts with HTR4. Interacts (via PDZ domain) with CADM1 (via C-terminus)Interacts (via PDZ domain) with CADM1; this interaction connects CADM1 with DLG1. Interacts (via Guanylate kinase-like domain) with PALS1. Interacts with DLG1 (via N-terminus); this interaction connects CADM1 with DLG1 and links CADM1 with the regulatory subunit of phosphoinositide-3-kinase (PI3K) by forming a multiprotein complex and participates in cell spreading. In terms of tissue distribution, expressed in retina (at protein level) at the subapical region (SAR) adjacent to adherens junctions at the OLM, and at the OPL.

It is found in the cell membrane. Its subcellular location is the apical cell membrane. It localises to the cell junction. The protein localises to the adherens junction. Functionally, participates in cell spreading through the phosphoinositide-3-kinase (PI3K) pathway by connecting CADM1 to DLG1 and the regulatory subunit of phosphoinositide-3-kinase (PI3K). Stabilizes HTR2C at the plasma membrane and prevents its desensitization. May participates in the maintenance of adherens junctions. The chain is MAGUK p55 subfamily member 3 from Homo sapiens (Human).